The following is a 374-amino-acid chain: Dihydrolipoyllysine-residue acetyltransferase component of acetoin cleaving system (374 aa).

The Lipoyl-binding domain occupies 9 to 84; that stretch reads IIPIVMPKWG…PVKALLGVLA (76 aa). An N6-lipoyllysine modification is found at Lys50. The region spanning 137-360 is the AB hydrolase-1 domain; sequence TVLFIHGFGG…DAGHMSQMEK (224 aa).

(R)-lipoate serves as cofactor.

The enzyme catalyses N(6)-[(R)-dihydrolipoyl]-L-lysyl-[protein] + acetyl-CoA = N(6)-[(R)-S(8)-acetyldihydrolipoyl]-L-lysyl-[protein] + CoA. It functions in the pathway ketone degradation; acetoin degradation. In terms of biological role, dihydrolipoamide acetyltransferase involved in acetoin catabolism. This chain is Dihydrolipoyllysine-residue acetyltransferase component of acetoin cleaving system (acoC), found in Cupriavidus necator (strain ATCC 17699 / DSM 428 / KCTC 22496 / NCIMB 10442 / H16 / Stanier 337) (Ralstonia eutropha).